Consider the following 272-residue polypeptide: NH(3)-dependent NAD(+) synthetase (272 aa).

45–52 (GISGGQDS) serves as a coordination point for ATP. Residue D51 participates in Mg(2+) binding. R138 contacts deamido-NAD(+). Residue T158 coordinates ATP. Residue E163 participates in Mg(2+) binding. K171 and D178 together coordinate deamido-NAD(+). 2 residues coordinate ATP: K187 and T209. 258–259 (HK) serves as a coordination point for deamido-NAD(+).

The protein belongs to the NAD synthetase family. In terms of assembly, homodimer.

The catalysed reaction is deamido-NAD(+) + NH4(+) + ATP = AMP + diphosphate + NAD(+) + H(+). It functions in the pathway cofactor biosynthesis; NAD(+) biosynthesis; NAD(+) from deamido-NAD(+) (ammonia route): step 1/1. Functionally, catalyzes the ATP-dependent amidation of deamido-NAD to form NAD. Uses ammonia as a nitrogen source. The protein is NH(3)-dependent NAD(+) synthetase of Bacillus cereus (strain ATCC 14579 / DSM 31 / CCUG 7414 / JCM 2152 / NBRC 15305 / NCIMB 9373 / NCTC 2599 / NRRL B-3711).